The chain runs to 48 residues: Cuticle protein 10 (48 aa).

This is Cuticle protein 10 from Limulus polyphemus (Atlantic horseshoe crab).